Reading from the N-terminus, the 320-residue chain is Porphobilinogen deaminase (320 aa).

Cys251 carries the S-(dipyrrolylmethanemethyl)cysteine modification.

This sequence belongs to the HMBS family. Monomer. Requires dipyrromethane as cofactor.

The enzyme catalyses 4 porphobilinogen + H2O = hydroxymethylbilane + 4 NH4(+). It participates in porphyrin-containing compound metabolism; protoporphyrin-IX biosynthesis; coproporphyrinogen-III from 5-aminolevulinate: step 2/4. In terms of biological role, tetrapolymerization of the monopyrrole PBG into the hydroxymethylbilane pre-uroporphyrinogen in several discrete steps. The protein is Porphobilinogen deaminase of Phenylobacterium zucineum (strain HLK1).